Here is a 389-residue protein sequence, read N- to C-terminus: Phospho-N-acetylmuramoyl-pentapeptide-transferase (389 aa).

The next 10 membrane-spanning stretches (helical) occupy residues 25–45 (RAVM…PAVI), 73–93 (TMGG…WADL), 97–117 (FIWI…VDDY), 135–155 (FWQS…VSEA), 190–210 (ISYP…IVGA), 222–242 (GLVI…AYVM), 259–279 (AGEL…FLWF), 287–307 (FMGD…AVIV), 311–331 (IVLF…MLQV), and 366–386 (QVVV…LSTL).

Belongs to the glycosyltransferase 4 family. MraY subfamily. It depends on Mg(2+) as a cofactor.

It localises to the cell inner membrane. The catalysed reaction is UDP-N-acetyl-alpha-D-muramoyl-L-alanyl-gamma-D-glutamyl-meso-2,6-diaminopimeloyl-D-alanyl-D-alanine + di-trans,octa-cis-undecaprenyl phosphate = di-trans,octa-cis-undecaprenyl diphospho-N-acetyl-alpha-D-muramoyl-L-alanyl-D-glutamyl-meso-2,6-diaminopimeloyl-D-alanyl-D-alanine + UMP. The protein operates within cell wall biogenesis; peptidoglycan biosynthesis. Catalyzes the initial step of the lipid cycle reactions in the biosynthesis of the cell wall peptidoglycan: transfers peptidoglycan precursor phospho-MurNAc-pentapeptide from UDP-MurNAc-pentapeptide onto the lipid carrier undecaprenyl phosphate, yielding undecaprenyl-pyrophosphoryl-MurNAc-pentapeptide, known as lipid I. In Paraburkholderia phytofirmans (strain DSM 17436 / LMG 22146 / PsJN) (Burkholderia phytofirmans), this protein is Phospho-N-acetylmuramoyl-pentapeptide-transferase.